We begin with the raw amino-acid sequence, 184 residues long: Large ribosomal subunit protein uL6 (184 aa).

This sequence belongs to the universal ribosomal protein uL6 family. In terms of assembly, part of the 50S ribosomal subunit.

This protein binds to the 23S rRNA, and is important in its secondary structure. It is located near the subunit interface in the base of the L7/L12 stalk, and near the tRNA binding site of the peptidyltransferase center. The sequence is that of Large ribosomal subunit protein uL6 from Thermococcus gammatolerans (strain DSM 15229 / JCM 11827 / EJ3).